Consider the following 337-residue polypeptide: GTPase Obg (337 aa).

Residues 1 to 159 form the Obg domain; sequence MKFVDSATIS…FELEMELKLM (159 aa). Positions 160–322 constitute an OBG-type G domain; it reads ADVGLVGFPN…LKDELWRQVS (163 aa). GTP is bound by residues 166–173, 191–195, 213–216, 280–283, and 303–305; these read GFPNAGKS, FTTLV, DIPG, TKMD, and SSV. Mg(2+) is bound by residues serine 173 and threonine 193.

It belongs to the TRAFAC class OBG-HflX-like GTPase superfamily. OBG GTPase family. As to quaternary structure, monomer. Mg(2+) is required as a cofactor.

The protein resides in the cytoplasm. Functionally, an essential GTPase which binds GTP, GDP and possibly (p)ppGpp with moderate affinity, with high nucleotide exchange rates and a fairly low GTP hydrolysis rate. Plays a role in control of the cell cycle, stress response, ribosome biogenesis and in those bacteria that undergo differentiation, in morphogenesis control. In Chlorobium phaeobacteroides (strain DSM 266 / SMG 266 / 2430), this protein is GTPase Obg.